A 67-amino-acid polypeptide reads, in one-letter code: MKASELRKLSNEELKEKILELKKKLFNLRFQNKIGSISNTAEINQTKKDIARILTILRERELNKTNG.

The protein belongs to the universal ribosomal protein uL29 family.

In Sulfurihydrogenibium sp. (strain YO3AOP1), this protein is Large ribosomal subunit protein uL29.